Consider the following 172-residue polypeptide: Macro domain-containing protein CT2219 (172 aa).

The 172-residue stretch at 1 to 172 (MPDNVLIHAI…DVYQKALAAG (172 aa)) folds into the Macro domain.

It belongs to the MacroD-type family.

The sequence is that of Macro domain-containing protein CT2219 from Chlorobaculum tepidum (strain ATCC 49652 / DSM 12025 / NBRC 103806 / TLS) (Chlorobium tepidum).